The chain runs to 355 residues: Ataxin-3-like protein (355 aa).

Residues 1–180 (MDFIFHEKQE…DCEADQLLQI (180 aa)) form the Josephin domain. The active-site Nucleophile is the Cys14. The active-site Proton acceptor is His119. The active site involves Asn134. Disordered regions lie at residues 209-230 (LEKV…EDFQ) and 253-331 (LSMQ…DISE). Over residues 215–228 (ESDESGTSDQDEED) the composition is skewed to acidic residues. UIM domains are found at residues 224–243 (QDEE…TNRE) and 244–258 (DEHL…MQGS). Residues 253-276 (LSMQGSSGNTSQDLPKTSCVTPAS) are compositionally biased toward polar residues. Over residues 278–293 (QPKKIKEDYFEKHQQE) the composition is skewed to basic and acidic residues.

Widely expressed.

It is found in the nucleus. The enzyme catalyses Thiol-dependent hydrolysis of ester, thioester, amide, peptide and isopeptide bonds formed by the C-terminal Gly of ubiquitin (a 76-residue protein attached to proteins as an intracellular targeting signal).. In terms of biological role, deubiquitinating enzyme that cleaves both 'Lys-48'-linked and 'Lys-63'-linked poly-ubiquitin chains (in vitro). Acts as a deubiquitinating enzyme for the transcription factor KLF5, playing a role in the regulation of KLF5 stability. This chain is Ataxin-3-like protein, found in Homo sapiens (Human).